The sequence spans 963 residues: Phosphofurin acidic cluster sorting protein 1 (963 aa).

The segment covering 1 to 22 (MAERGGAGGGPGGAGGGSGQRG) has biased composition (gly residues). Disordered stretches follow at residues 1–72 (MAER…SSST) and 78–97 (VAVA…RTPA). Position 2 is an N-acetylalanine (A2). S28 carries the post-translational modification Phosphoserine. T46 bears the Phosphothreonine mark. Low complexity predominate over residues 53 to 72 (ATSSSSSTSAAAASSSSSST). Residues 168–175 (ETELQLTF) form an involved in binding to AP-1 region. Y251 is modified (phosphotyrosine). Residues 262-273 (GIKSKLSDRSPD) are compositionally biased toward basic and acidic residues. Disordered stretches follow at residues 262–299 (GIKS…LHGQ) and 377–428 (NPSD…GKDT). Acidic residues predominate over residues 276-293 (NYSEEEEESFSSEQEGSD). Positions 353–377 (HVSREQIREVEEDLDELYDSLEMYN) form a coiled coil. Phosphoserine occurs at positions 379 and 381. Polar residues predominate over residues 406 to 428 (MSQSSSQTEIGSLNSKGSLGKDT). Phosphoserine occurs at positions 430 and 495. 2 disordered regions span residues 476-542 (PEKV…HSTQ) and 760-804 (SPST…SMSS). Residues 483–496 (MKSSKTDLQGSASP) are compositionally biased toward polar residues. T504 carries the phosphothreonine modification. Residues S519, S528, S529, S531, and S534 each carry the phosphoserine modification. Positions 770–804 (SPVVSLTVPSTSPPSSSGLSRDATATPPSSPSMSS) are enriched in low complexity.

The protein belongs to the PACS family. Associates with AP-1 and AP-3 but not with AP-2 complexes. Interacts with FURIN. Forms a ternary complex with FURIN and AP-1. Interacts with NPHP1; the interaction is dependent of NPHP1 phosphorylation by CK2. Interacts with PKD2 (via acidic region). Interacts with SORL1. Interacts with WDR37. As to quaternary structure, (Microbial infection) Interacts with HIV-1 Nef. In terms of assembly, (Microbial infection) Interacts with Epstein-barr virus protein BBLF1.

It localises to the golgi apparatus. Its subcellular location is the trans-Golgi network. Coat protein that is involved in the localization of trans-Golgi network (TGN) membrane proteins that contain acidic cluster sorting motifs. Controls the endosome-to-Golgi trafficking of furin and mannose-6-phosphate receptor by connecting the acidic-cluster-containing cytoplasmic domain of these molecules with the adapter-protein complex-1 (AP-1) of endosomal clathrin-coated membrane pits. Involved in HIV-1 nef-mediated removal of MHC-I from the cell surface to the TGN. Required for normal ER Ca2+ handling in lymphocytes. Together with WDR37, it plays an essential role in lymphocyte development, quiescence and survival. Required for stabilizing peripheral lymphocyte populations. This Homo sapiens (Human) protein is Phosphofurin acidic cluster sorting protein 1 (PACS1).